Here is a 206-residue protein sequence, read N- to C-terminus: LexA repressor (206 aa).

The H-T-H motif DNA-binding region spans 28-48 (RAEIARELGFRSANAAEEHLK). Active-site for autocatalytic cleavage activity residues include Ser-123 and Lys-160.

The protein belongs to the peptidase S24 family. As to quaternary structure, homodimer.

The catalysed reaction is Hydrolysis of Ala-|-Gly bond in repressor LexA.. Functionally, represses a number of genes involved in the response to DNA damage (SOS response), including recA and lexA. In the presence of single-stranded DNA, RecA interacts with LexA causing an autocatalytic cleavage which disrupts the DNA-binding part of LexA, leading to derepression of the SOS regulon and eventually DNA repair. This chain is LexA repressor, found in Vibrio parahaemolyticus serotype O3:K6 (strain RIMD 2210633).